The primary structure comprises 440 residues: Putative epoxide hydrolase (440 aa).

A disordered region spans residues 1–21; that stretch reads MTKTLAEQPGEGAAPVSPSPS. The segment at residues 1–49 is a signal peptide (tat-type signal); sequence MTKTLAEQPGEGAAPVSPSPSRRALLHGAAGLGALAAGAAVAGPGLAFA.

It belongs to the peptidase S33 family. In terms of processing, predicted to be exported by the Tat system. The position of the signal peptide cleavage has not been experimentally proven.

The catalysed reaction is an epoxide + H2O = an ethanediol. The polypeptide is Putative epoxide hydrolase (Stigmatella aurantiaca (strain DW4/3-1)).